The following is a 629-amino-acid chain: DNA topoisomerase 4 subunit B (629 aa).

Residues tyrosine 4, asparagine 41, aspartate 68, 109 to 115, and lysine 333 contribute to the ATP site; that span reads GLHGVGI. One can recognise a Toprim domain in the interval 411-524; sequence AELFLVEGDS…AGHVYVAMPP (114 aa). Residues glutamate 417, aspartate 489, and aspartate 491 each contribute to the Mg(2+) site.

This sequence belongs to the type II topoisomerase family. ParE type 1 subfamily. In terms of assembly, heterotetramer composed of ParC and ParE. Mg(2+) serves as cofactor. The cofactor is Mn(2+). Ca(2+) is required as a cofactor.

It catalyses the reaction ATP-dependent breakage, passage and rejoining of double-stranded DNA.. Its function is as follows. Topoisomerase IV is essential for chromosome segregation. It relaxes supercoiled DNA. Performs the decatenation events required during the replication of a circular DNA molecule. This Pseudomonas aeruginosa (strain ATCC 15692 / DSM 22644 / CIP 104116 / JCM 14847 / LMG 12228 / 1C / PRS 101 / PAO1) protein is DNA topoisomerase 4 subunit B.